Here is a 365-residue protein sequence, read N- to C-terminus: Peptide chain release factor 2 (365 aa).

N5-methylglutamine is present on glutamine 252.

It belongs to the prokaryotic/mitochondrial release factor family. Post-translationally, methylated by PrmC. Methylation increases the termination efficiency of RF2.

Its subcellular location is the cytoplasm. Peptide chain release factor 2 directs the termination of translation in response to the peptide chain termination codons UGA and UAA. The sequence is that of Peptide chain release factor 2 from Haemophilus ducreyi (strain 35000HP / ATCC 700724).